The chain runs to 359 residues: Gap junction alpha-5 protein (359 aa).

Over methionine 1–threonine 19 the chain is Cytoplasmic. The helical transmembrane segment at valine 20–alanine 40 threads the bilayer. Residues alanine 41 to arginine 76 are Extracellular-facing. Residues tyrosine 77 to valine 97 traverse the membrane as a helical segment. Over histidine 98–glutamate 165 the chain is Cytoplasmic. The chain crosses the membrane as a helical span at residues valine 166 to cysteine 186. The Extracellular segment spans residues arginine 187–asparagine 206. A helical transmembrane segment spans residues valine 207–leucine 227. Over tyrosine 228–valine 359 the chain is Cytoplasmic. Disordered regions lie at residues serine 285–glutamine 305 and arginine 317–valine 359. Serine 354 and serine 358 each carry phosphoserine.

Belongs to the connexin family. Alpha-type (group II) subfamily. A connexon is composed of a hexamer of connexins.

It is found in the cell membrane. Its subcellular location is the cell junction. The protein localises to the gap junction. In terms of biological role, one gap junction consists of a cluster of closely packed pairs of transmembrane channels, the connexons, through which materials of low MW diffuse from one cell to a neighboring cell. This chain is Gap junction alpha-5 protein (GJA5), found in Bos taurus (Bovine).